The primary structure comprises 453 residues: Ribulose bisphosphate carboxylase large chain (453 aa).

Residues 1 to 2 constitute a propeptide that is removed on maturation; the sequence is MS. Pro3 is subject to N-acetylproline. Lys14 carries the post-translational modification N6,N6,N6-trimethyllysine. Substrate-binding residues include Asn123 and Thr173. Catalysis depends on Lys175, which acts as the Proton acceptor. Lys177 contacts substrate. Mg(2+)-binding residues include Lys201, Asp203, and Glu204. Lys201 is subject to N6-carboxylysine. The Proton acceptor role is filled by His294. The substrate site is built by Arg295, His327, and Ser379.

This sequence belongs to the RuBisCO large chain family. Type I subfamily. Heterohexadecamer of 8 large chains and 8 small chains; disulfide-linked. The disulfide link is formed within the large subunit homodimers. Mg(2+) is required as a cofactor. The disulfide bond which can form in the large chain dimeric partners within the hexadecamer appears to be associated with oxidative stress and protein turnover.

Its subcellular location is the plastid. The protein resides in the chloroplast. The catalysed reaction is 2 (2R)-3-phosphoglycerate + 2 H(+) = D-ribulose 1,5-bisphosphate + CO2 + H2O. It carries out the reaction D-ribulose 1,5-bisphosphate + O2 = 2-phosphoglycolate + (2R)-3-phosphoglycerate + 2 H(+). RuBisCO catalyzes two reactions: the carboxylation of D-ribulose 1,5-bisphosphate, the primary event in carbon dioxide fixation, as well as the oxidative fragmentation of the pentose substrate in the photorespiration process. Both reactions occur simultaneously and in competition at the same active site. The sequence is that of Ribulose bisphosphate carboxylase large chain from Galium album (White bedstraw).